A 1331-amino-acid polypeptide reads, in one-letter code: ABC multidrug transporter MDR2 (1331 aa).

Positions 1–50 are disordered; that stretch reads MVEPSEKPNTQNDDVSKQEIRNPVSSSSSTSDKEKVAKKGNSDATKSLTP. Basic and acidic residues predominate over residues 31–41; that stretch reads SDKEKVAKKGN. The next 4 membrane-spanning stretches (helical) occupy residues 93 to 113, 147 to 167, 219 to 239, and 242 to 262; these read MILLAIVSLASIAAGAALPLF, YFVYLGIAQFILLYVSTVGFI, KVGLTLTALSTFFSAFIIGYV, and WKLALICTSTIVAMVLVMGGI. Residues 97-387 form the ABC transmembrane type-1 1 domain; sequence AIVSLASIAA…VAPNTQAFAS (291 aa). Asn-293 carries an N-linked (GlcNAc...) asparagine glycan. 2 helical membrane passes run 325 to 345 and 358 to 378; these read LGIMFGSMMAIMYSNYGLGFW and LSAIVNILLAIVIGSFSIGNV. Residues 422–667 enclose the ABC transporter 1 domain; sequence IEFRGIKHIY…KGTYLQLVEA (246 aa). 457–464 lines the ATP pocket; it reads GPSGSGKS. An N-linked (GlcNAc...) asparagine glycan is attached at Asn-529. Transmembrane regions (helical) follow at residues 762–782 and 808–828; these read LCGFFFAVLSGAGQPVQSVFF and LMFLMLGLVQLITQSAQGVIF. The ABC transmembrane type-1 2 domain maps to 764-1051; that stretch reads GFFFAVLSGA…VFSFSPDMGK (288 aa). A glycan (N-linked (GlcNAc...) asparagine) is linked at Asn-860. Transmembrane regions (helical) follow at residues 884-904, 910-930, 995-1015, and 1025-1045; these read LGTILMVSTTLIVALTVALAF, LVCISTVPVLLLCGFYRFWIL, ASQSFSFFCLALGFWYGGGLL, and FFLCISCVIFGSQSAGIVFSF. In terms of domain architecture, ABC transporter 2 spans 1086-1324; sequence IEFRDVHFRY…KGRYYELVHM (239 aa). The N-linked (GlcNAc...) asparagine glycan is linked to Asn-1108. 1121–1128 provides a ligand contact to ATP; sequence GPSGCGKS.

The protein belongs to the ABC transporter superfamily. ABCB family. Multidrug resistance exporter (TC 3.A.1.201) subfamily.

The protein resides in the cell membrane. The enzyme catalyses itraconazole(in) + ATP + H2O = itraconazole(out) + ADP + phosphate + H(+). Functionally, ABC-type efflux transporter involved in the modulation susceptibility to itraconazole. The chain is ABC multidrug transporter MDR2 from Trichophyton rubrum (strain ATCC MYA-4607 / CBS 118892) (Athlete's foot fungus).